A 506-amino-acid polypeptide reads, in one-letter code: Sodium-coupled neutral amino acid symporter 2 (506 aa).

Residues 1–23 (MKKAEMGRFNISPDEDSSSYSSN) are disordered. Over 1–76 (MKKAEMGRFN…HPGTTSFGMS (76 aa)) the chain is Cytoplasmic. The tract at residues 1-96 (MKKAEMGRFN…SGILGLSYAM (96 aa)) is regulates protein turnover upon amino acid deprivation. Residues Ser-12, Ser-21, Ser-22, and Ser-55 each carry the phosphoserine modification. The chain crosses the membrane as a helical span at residues 77-96 (VFNLSNAIVGSGILGLSYAM). Asn-82 is a binding site for Na(+). Topologically, residues 97–102 (ANTGIA) are extracellular. The chain crosses the membrane as a helical span at residues 103–123 (LFIILLTFVSIFSLYSVHLLL). The Cytoplasmic portion of the chain corresponds to 124-158 (KTANEGGSLLYEQLGYKAFGLVGKLAASGSITMQN). Residues 159-177 (IGAMSSYLFIVKYELPLVI) form a helical membrane-spanning segment. Over 178–188 (QALTNIEDKTG) the chain is Extracellular. A helical membrane pass occupies residues 189 to 209 (LWYLNGNYLVLLVSLVVILPL). Residues 210 to 217 (SLFRNLGY) lie on the Cytoplasmic side of the membrane. A helical transmembrane segment spans residues 218 to 238 (LGYTSGLSLLCMVFFLIVVIC). Over 239–292 (KKFQVPCPVEAALIINETINTTLTQPTALVPALSHNVTENDSCRPHYFIFNSQT) the chain is Extracellular. A disulfide bond links Cys-245 and Cys-281. Residues Asn-258 and Asn-274 are each glycosylated (N-linked (GlcNAc...) asparagine). Residues 293–313 (VYAVPILIFSFVCHPAVLPIY) traverse the membrane as a helical segment. The Cytoplasmic segment spans residues 314 to 329 (EELKDRSRRRMMNVSK). Residues 330-350 (ISFFAMFLMYLLAALFGYLTF) form a helical membrane-spanning segment. The Extracellular segment spans residues 351 to 371 (YEHVESELLHTYSSILGTDIL). A helical transmembrane segment spans residues 372–392 (LLIVRLAVLMAVTLTVPVVIF). Thr-386 lines the Na(+) pocket. Residues 393–413 (PIRSSVTHLLCASKDFSWWRH) are Cytoplasmic-facing. A helical transmembrane segment spans residues 414 to 434 (SLITVSILAFTNLLVIFVPTI). At 435–436 (RD) the chain is on the extracellular side. A helical transmembrane segment spans residues 437–457 (IFGFIGASAASMLIFILPSAF). Residues 458 to 472 (YIKLVKKEPMKSVQK) are Cytoplasmic-facing. The helical transmembrane segment at 473–495 (IGALFFLLSGVLVMTGSMALIVL) threads the bilayer. The Extracellular segment spans residues 496 to 506 (DWVHNAPGGGH).

The protein belongs to the amino acid/polyamine transporter 2 family. Post-translationally, polyubiquitination by NEDD4L regulates the degradation and the activity of SLC38A2.

It is found in the cell membrane. It catalyses the reaction L-alanine(in) + Na(+)(in) = L-alanine(out) + Na(+)(out). The enzyme catalyses glycine(in) + Na(+)(in) = glycine(out) + Na(+)(out). The catalysed reaction is L-serine(in) + Na(+)(in) = L-serine(out) + Na(+)(out). It carries out the reaction L-proline(in) + Na(+)(in) = L-proline(out) + Na(+)(out). It catalyses the reaction L-methionine(in) + Na(+)(in) = L-methionine(out) + Na(+)(out). The enzyme catalyses L-histidine(in) + Na(+)(in) = L-histidine(out) + Na(+)(out). The catalysed reaction is L-asparagine(in) + Na(+)(in) = L-asparagine(out) + Na(+)(out). It carries out the reaction L-glutamine(in) + Na(+)(in) = L-glutamine(out) + Na(+)(out). It catalyses the reaction L-threonine(in) + Na(+)(in) = L-threonine(out) + Na(+)(out). The enzyme catalyses L-leucine(in) + Na(+)(in) = L-leucine(out) + Na(+)(out). The catalysed reaction is L-phenylalanine(in) + Na(+)(in) = L-phenylalanine(out) + Na(+)(out). Inhibited by N-methyl-D-glucamine. Inhibited by choline. Allosteric regulation of sodium ions binding by pH. In terms of biological role, symporter that cotransports neutral amino acids and sodium ions from the extracellular to the intracellular side of the cell membrane. The transport is pH-sensitive, Li(+)-intolerant, electrogenic, driven by the Na(+) electrochemical gradient and cotransports of neutral amino acids and sodium ions with a stoichiometry of 1:1. May function in the transport of amino acids at the blood-brain barrier. May function in the transport of amino acids in the supply of maternal nutrients to the fetus through the placenta. Maintains a key metabolic glutamine/glutamate balance underpinning retrograde signaling by dendritic release of the neurotransmitter glutamate. Transports L-proline in differentiating osteoblasts for the efficient synthesis of proline-enriched proteins and provides proline essential for osteoblast differentiation and bone formation during bone development. This chain is Sodium-coupled neutral amino acid symporter 2, found in Pan paniscus (Pygmy chimpanzee).